A 200-amino-acid polypeptide reads, in one-letter code: Chromophore lyase CpcT/CpeT 2 (200 aa).

Belongs to the CpcT/CpeT biliprotein lyase family.

In terms of biological role, covalently attaches a chromophore to Cys residue(s) of phycobiliproteins. The chain is Chromophore lyase CpcT/CpeT 2 from Microcystis aeruginosa (strain NIES-843 / IAM M-2473).